The primary structure comprises 530 residues: Sulfate adenylyltransferase (530 aa).

The N-terminal stretch occupies residues 1–178; that stretch reads MPIPAPHGGK…IQGLDYPTHY (178 aa). The interval 179–410 is catalytic; sequence DYIPFRKTPT…LRESNPPRSK (232 aa). Gln208 serves as a coordination point for sulfate. Residues 208–211 and 304–307 contribute to the ATP site; these read QTRN and GRDH. Residues Thr209, Arg210, and Asn211 contribute to the active site. Sulfate is bound at residue Arg210. Ala308 serves as a coordination point for sulfate. ATP is bound at residue Val348. A required for oligomerization; adenylyl-sulfate kinase-like region spans residues 411–530; that stretch reads QGFAIVIDSS…LVSQGFYQQS (120 aa).

The protein belongs to the sulfate adenylyltransferase family. In terms of assembly, homohexamer. Dimer of trimers.

Its subcellular location is the cytoplasm. The enzyme catalyses sulfate + ATP + H(+) = adenosine 5'-phosphosulfate + diphosphate. It participates in sulfur metabolism; hydrogen sulfide biosynthesis; sulfite from sulfate: step 1/3. Catalyzes the first intracellular reaction of sulfate assimilation, forming adenosine-5'-phosphosulfate (APS) from inorganic sulfate and ATP. Plays an important role in sulfate activation as a component of the biosynthesis pathway of sulfur-containing amino acids. The polypeptide is Sulfate adenylyltransferase (Debaryomyces hansenii (strain ATCC 36239 / CBS 767 / BCRC 21394 / JCM 1990 / NBRC 0083 / IGC 2968) (Yeast)).